Reading from the N-terminus, the 72-residue chain is Large ribosomal subunit protein bL31 (72 aa).

4 residues coordinate Zn(2+): cysteine 16, cysteine 18, cysteine 38, and cysteine 41.

This sequence belongs to the bacterial ribosomal protein bL31 family. Type A subfamily. In terms of assembly, part of the 50S ribosomal subunit. Requires Zn(2+) as cofactor.

Functionally, binds the 23S rRNA. The sequence is that of Large ribosomal subunit protein bL31 from Aliivibrio fischeri (strain ATCC 700601 / ES114) (Vibrio fischeri).